A 209-amino-acid polypeptide reads, in one-letter code: Uracil phosphoribosyltransferase (209 aa).

5-phospho-alpha-D-ribose 1-diphosphate contacts are provided by residues R79, R104, and 131 to 139 (DPMLATGGS). Residues I194 and 199 to 201 (GDA) contribute to the uracil site. A 5-phospho-alpha-D-ribose 1-diphosphate-binding site is contributed by D200.

This sequence belongs to the UPRTase family. Mg(2+) serves as cofactor.

The catalysed reaction is UMP + diphosphate = 5-phospho-alpha-D-ribose 1-diphosphate + uracil. It participates in pyrimidine metabolism; UMP biosynthesis via salvage pathway; UMP from uracil: step 1/1. Its activity is regulated as follows. Allosterically activated by GTP. Functionally, catalyzes the conversion of uracil and 5-phospho-alpha-D-ribose 1-diphosphate (PRPP) to UMP and diphosphate. The sequence is that of Uracil phosphoribosyltransferase from Geobacillus kaustophilus (strain HTA426).